The sequence spans 267 residues: UPF0162 protein HI_1558 (267 aa).

The protein belongs to the UPF0162 family.

The protein is UPF0162 protein HI_1558 of Haemophilus influenzae (strain ATCC 51907 / DSM 11121 / KW20 / Rd).